The chain runs to 234 residues: Carboxy-S-adenosyl-L-methionine synthase (234 aa).

S-adenosyl-L-methionine contacts are provided by residues Tyr35, 60-62 (GSS), 83-84 (DN), Asn124, and Arg191.

This sequence belongs to the class I-like SAM-binding methyltransferase superfamily. Cx-SAM synthase family. Homodimer.

It catalyses the reaction prephenate + S-adenosyl-L-methionine = carboxy-S-adenosyl-L-methionine + 3-phenylpyruvate + H2O. Functionally, catalyzes the conversion of S-adenosyl-L-methionine (SAM) to carboxy-S-adenosyl-L-methionine (Cx-SAM). In Nautilia profundicola (strain ATCC BAA-1463 / DSM 18972 / AmH), this protein is Carboxy-S-adenosyl-L-methionine synthase.